Reading from the N-terminus, the 83-residue chain is Putative membrane protein insertion efficiency factor (83 aa).

Belongs to the UPF0161 family.

It is found in the cell membrane. Could be involved in insertion of integral membrane proteins into the membrane. The sequence is that of Putative membrane protein insertion efficiency factor from Streptococcus thermophilus (strain ATCC BAA-250 / LMG 18311).